The primary structure comprises 105 residues: MASRIKKGDQVIVIAGKDKGKQGEIIRIDGHRVVVSNVNFVKRHTKPNPQRGISGGLIDREAPIHVSNIKILNPMTGKGDRVGFKILGDGCKLRIFRSTGEVIGA.

Belongs to the universal ribosomal protein uL24 family. Part of the 50S ribosomal subunit.

Its function is as follows. One of two assembly initiator proteins, it binds directly to the 5'-end of the 23S rRNA, where it nucleates assembly of the 50S subunit. One of the proteins that surrounds the polypeptide exit tunnel on the outside of the subunit. This is Large ribosomal subunit protein uL24 from Xylella fastidiosa (strain M23).